Reading from the N-terminus, the 561-residue chain is Putative transport protein YbjL (561 aa).

5 consecutive transmembrane segments (helical) span residues 8 to 28, 32 to 52, 66 to 86, 94 to 114, and 158 to 178; these read LLNG…LCLG, LGSV…LLGQ, FMLF…SIFF, MLAL…GKLF, and NLSL…IVGA. 2 consecutive RCK C-terminal domains span residues 200-288 and 292-373; these read RGLD…SFRN and VFDR…RIGF. Transmembrane regions (helical) follow at residues 383 to 403, 406 to 426, 447 to 467, 475 to 495, and 537 to 557; these read LLAF…TFQF, FSFG…LGFL, FGLM…INNG, MLIA…LFGA, and GTYA…VIIW.

Belongs to the AAE transporter (TC 2.A.81) family. YbjL subfamily.

The protein localises to the cell membrane. The sequence is that of Putative transport protein YbjL from Salmonella choleraesuis (strain SC-B67).